Reading from the N-terminus, the 496-residue chain is MSGLPRSVPDVLDPLGPGAPVLVAGGRVTGQAVAAVLTRFGATPTVCDDDPVMLRPHAERGLPTVSSSDAVQQITGYALVVASPGFSPAIPLLAAAAAAGVPIWGDVELAWRLDAAGCYGPPRSWLVVTGTNGKTTTTSMLHAMLIAGGRRAVLCGNIGSAVLDVLDEPAELLAVELSSFQLHWAPSLRPEAGAVLNIAEDHLDWHATMAEYTAAKARVLTGGVAVAGLDDSRAAALLDGSPAQVRVGFRLGEPAAGELGVRDAHLVDRAFSDDLTLLPVASIPVPGPVGVLDALAAAALARSVGVPAGAIADAVTSFRVGRHRAEVVAVADGITYVDDSKATNPHAARASVLAYPRVVWIAGGLLKGASLHAEVAAMASRLVGAVLIGRDRAAVAEALSRHAPDVPVVQVVAGEDTGMPATVEVPVACVLDVAKDDKAGETVGAAVMTAAVAAARRMAQPGDTVLLAPAGASFDQFTGYADRGEAFATAVRAVIR.

130–136 contributes to the ATP binding site; it reads GTNGKTT.

This sequence belongs to the MurCDEF family.

It is found in the cytoplasm. It carries out the reaction UDP-N-acetyl-alpha-D-muramoyl-L-alanine + D-glutamate + ATP = UDP-N-acetyl-alpha-D-muramoyl-L-alanyl-D-glutamate + ADP + phosphate + H(+). It functions in the pathway cell wall biogenesis; peptidoglycan biosynthesis. Functionally, cell wall formation. Catalyzes the addition of glutamate to the nucleotide precursor UDP-N-acetylmuramoyl-L-alanine (UMA). The sequence is that of UDP-N-acetylmuramoylalanine--D-glutamate ligase (murD) from Mycobacterium tuberculosis (strain CDC 1551 / Oshkosh).